The primary structure comprises 629 residues: MWNVDVTCIGGIRSGEATLRPGPNIVQASNFQGKSSFLAAIQTAIGTTGLLTEDHPLMENEDDGKVTLETDEETYTVSLTRATDSDEPAISRSGTPYLTRDQDQIAARLFAVLGEDNPIRAAVREENQERLTELLKKPLETENIDLRIEALQREIKELEDEVAAAEAASADLPAAQQKVTRLQGELRDLNETRDELERKVDEETDQRALRDELTAKQSDLEREEARLERLENQVDRRKAQLDDKEAALESLDIPDSPTAEADIAEKQTRIDELAVKIDLLDDLHRSTKAIIDEGEIDLITDVERTLSGDTFSCFVCGAETTAEAVTERLNEISDRQESLREQRATLTEEVTQMQQRTREIESKRQQKAELEDEIKRLRVDIQEDQHEVRSIEATIEELQAEIEQREAEYEAAEKAGESHSAELKTIQQKIGSTETKLDRAQAELERIEAELQKRNDRQEQLETKRDELETLRQRRKQKYNELVNQFDAAMADIIGRFAPGFDGAYLDQKTDANDTVGFEINLARDGHTTDLDTLSEGERELVGIVTALAGYRTFSVGDRVPCILLDGIGQLAAEHIRHMIEYLENTAEILVTTAYPEAGSFDGETVSPEHWDVISHETAQSRDHPQITN.

Coiled-coil stretches lie at residues 139–282 (LETE…LLDD) and 318–487 (AETT…NQFD).

This sequence belongs to the Sph1/Sph2 family.

The protein resides in the cytoplasm. Functionally, may play a role in a late step of replication. This Halobacterium salinarum (strain ATCC 29341 / DSM 671 / R1) protein is Smc-like protein Sph1 (sph1).